The chain runs to 559 residues: Sesquiterpene synthase (559 aa).

Asp-312, Asp-316, and Glu-464 together coordinate Mg(2+). Positions 312–316 match the DDXXD motif motif; that stretch reads DDIYD.

It belongs to the terpene synthase family. Tpsa subfamily. Requires Mg(2+) as cofactor. Mn(2+) serves as cofactor.

Its function is as follows. Catalyzes alpha-humulene and delta-cadinene, as well as beta-elemene, the thermal rearrangement product of germacrene A and several other bicyclic sesquiterpenes when incubated with (2E,6E)-farnesyl diphosphate. The sequence is that of Sesquiterpene synthase from Santalum austrocaledonicum (Sandalwood).